A 544-amino-acid polypeptide reads, in one-letter code: Calcium-dependent protein kinase 6 (544 aa).

The interval 1 to 47 is disordered; the sequence is MGNSCRGSFKDKIYEGNHSRPEENSKSTTTTVSSVHSPTTDQDFSKQ. G2 is lipidated: N-myristoyl glycine. Over residues 8 to 25 the composition is skewed to basic and acidic residues; the sequence is SFKDKIYEGNHSRPEENS. A compositionally biased stretch (low complexity) spans 26–40; it reads KSTTTTVSSVHSPTT. The Protein kinase domain occupies 85–343; the sequence is YTLSRKLGQG…AHEVLRHPWI (259 aa). ATP-binding positions include 91 to 99 and K114; that span reads LGQGQFGTT. D209 functions as the Proton acceptor in the catalytic mechanism. S249 carries the phosphoserine modification. The autoinhibitory domain stretch occupies residues 349 to 379; it reads APDRALDPAVLSRLKQFSAMNKLKKMALKVI. EF-hand domains follow at residues 386–421, 422–457, 458–493, and 497–527; these read EEIAGLRAMFEAMDTDNSGAITFDELKAGLRRYGST, LKDTEIRDLMEAADVDNSGTIDYSEFIAATIHLNKL, EREEHLVSAFQYFDKDGSGYITIDELQQSCIEHGMT, and LEDIIKEVDQDNDGRIDYEEFVAMMQKGNAG. Ca(2+) contacts are provided by D399, D401, S403, E410, D435, D437, S439, T441, E446, D471, D473, S475, Y477, E482, D505, D507, D509, R511, and E516.

It belongs to the protein kinase superfamily. Ser/Thr protein kinase family. CDPK subfamily. Interacts with SLAC1. Interacts with FD. In terms of tissue distribution, expressed in both guard cells and mesophyll cells. Expressed in the shoot apical meristem.

It localises to the cell membrane. The protein resides in the nucleus. The enzyme catalyses L-seryl-[protein] + ATP = O-phospho-L-seryl-[protein] + ADP + H(+). It carries out the reaction L-threonyl-[protein] + ATP = O-phospho-L-threonyl-[protein] + ADP + H(+). With respect to regulation, activated by calcium. Autophosphorylation may play an important role in the regulation of the kinase activity. Functionally, may play a role in signal transduction pathways that involve calcium as a second messenger. Functions in abscisic acid (ABA) regulation of guard cell S-type anion- and Ca(2+)-permeable channels and stomatal closure. Phosphorylates FD. The protein is Calcium-dependent protein kinase 6 (CPK6) of Arabidopsis thaliana (Mouse-ear cress).